The sequence spans 324 residues: PGR5-like protein 1A, chloroplastic (324 aa).

Residues 1 to 60 constitute a chloroplast transit peptide; sequence MGSKMLFSLTSPRLFSAVSRKPSSSFSPSPPSPSSRTQWTQLSPGKSISLRRRVFLLPAK. The tract at residues 16–42 is disordered; that stretch reads SAVSRKPSSSFSPSPPSPSSRTQWTQL. Topologically, residues 61-198 are stromal; the sequence is ATTEQSGPVG…KVYSDLAVDY (138 aa). An intrachain disulfide couples C82 to C183. A helical membrane pass occupies residues 199–219; the sequence is FKMLLLNVPATVVALGLFFFL. The Lumenal, thylakoid portion of the chain corresponds to 220-236; sequence DDITGFEITYIMELPEP. Residues 237 to 257 traverse the membrane as a helical segment; that stretch reads YSFIFTWFAAVPVIVYLALSI. At 258–324 the chain is on the stromal side; that stretch reads TKLIIKDFLI…LITLPEGSQA (67 aa).

It belongs to the PGR5 family. In terms of assembly, homodimer and heterodimer with PGR5. Interacts with PGR5, FD2, petC, psaD1, LFNR1 and LFNR2. Also interacts with a Fe-containing cofactor (FCC). Post-translationally, disulfide bonds; Cys-300 and Cys-303 are probably involved in the formation of disulfide bridges with 'Cys-11' and 'Cys-105' of PGR5 while Cys-272 and Cys-275 are probably involved in the binding of a Fe-containing cofactor (FCC).

It localises to the plastid. The protein localises to the chloroplast thylakoid membrane. Its activity is regulated as follows. Inhibited by antimycin A. In terms of biological role, ferredoxin-plastoquinone reductase involved in cyclic electron flow (CEF) around photosystem I. The homodimer is probably not involved in CEF. In Arabidopsis thaliana (Mouse-ear cress), this protein is PGR5-like protein 1A, chloroplastic (PGRL1A).